The sequence spans 324 residues: Phosphomevalonate decarboxylase (324 aa).

Belongs to the phosphomevalonate decarboxylase family.

It catalyses the reaction (R)-5-phosphomevalonate + ATP = isopentenyl phosphate + ADP + phosphate + CO2. Its activity is regulated as follows. Is strongly inhibited by 6-fluoromevalonate monophosphate but shows negligible inhibition by 6-fluoromevalonate diphosphate (a potent inhibitor of the classical mevalonate pathway). In terms of biological role, catalyzes the decarboxylation of mevalonate 5-phosphate (MVAP) to isopentenyl phosphate (IP). Functions in an alternate mevalonate (MVA) pathway leading to isopentenyl diphosphate (IPP), a key precursor for the biosynthesis of isoprenoid compounds such as archaeal membrane lipids. In Haloferax volcanii (strain ATCC 29605 / DSM 3757 / JCM 8879 / NBRC 14742 / NCIMB 2012 / VKM B-1768 / DS2) (Halobacterium volcanii), this protein is Phosphomevalonate decarboxylase (mvaD).